Consider the following 259-residue polypeptide: Synaptophysin-like protein 1 (259 aa).

Residues 1–33 lie on the Cytoplasmic side of the membrane; sequence MAPNIYLVRQRISRLGQRMSGFQINLNPLKEPL. An MARVEL domain is found at 28–237; that stretch reads PLKEPLGFIK…NAWFVYKETS (210 aa). The chain crosses the membrane as a helical span at residues 34–54; sequence GFIKVLEWIASIFAFATCGGF. Residues 55–116 lie on the Vesicular side of the membrane; it reads KGQTEIQVNC…LIGDYSSSAQ (62 aa). The N-linked (GlcNAc...) asparagine glycan is linked to Asn-71. Residues 117–137 form a helical membrane-spanning segment; sequence FYVTFAVFVFLYCIAALLLYV. Topologically, residues 138-150 are cytoplasmic; it reads GYTSLYLDSRKLP. The helical transmembrane segment at 151 to 171 threads the bilayer; it reads MIDFVVTLVATFLWLVSTSAW. Over 172–212 the chain is Vesicular; the sequence is AKALTDIKIATGHNIIDELPPCKKKAVLCYFGSVTSMGSLN. A glycan (N-linked (GlcNAc...) asparagine) is linked at Asn-212. Residues 213-233 form a helical membrane-spanning segment; the sequence is VSVIFGFLNMILWGGNAWFVY. Residues 234-259 are Cytoplasmic-facing; that stretch reads KETSLHSPSNTSAPHSQGGIPPPTGI.

Belongs to the synaptophysin/synaptobrevin family.

Its subcellular location is the cytoplasmic vesicle membrane. It is found in the melanosome. This Homo sapiens (Human) protein is Synaptophysin-like protein 1 (SYPL1).